A 452-amino-acid chain; its full sequence is GATA-binding factor 2 (452 aa).

The interval 130-182 is disordered; it reads GGSLYPGTGSSACPSSSHSSPHLFGFPPTPPKDVSPDPGPASPPSSSRLEDKD. Over residues 139–151 the composition is skewed to low complexity; it reads SSACPSSSHSSPH. Residues 156–172 show a composition bias toward pro residues; sequence PPTPPKDVSPDPGPASP. 2 consecutive GATA-type zinc fingers follow at residues 267–291 and 321–345; these read CVNC…CNAC and CANC…CNAC. Positions 426-438 are enriched in polar residues; sequence QTPTPIHPSSSLS. A disordered region spans residues 426–452; it reads QTPTPIHPSSSLSFGHPHHSSMVTAMG.

Expressed in the developing ventral blood island, and in the embryonic nervous system.

Its subcellular location is the nucleus. The protein is GATA-binding factor 2 (gata2) of Xenopus laevis (African clawed frog).